A 46-amino-acid polypeptide reads, in one-letter code: Delta-actitoxin-Avd1d (46 aa).

Disulfide bonds link C4–C44, C6–C34, and C27–C45.

This sequence belongs to the sea anemone sodium channel inhibitory toxin family. Type I subfamily.

It is found in the secreted. It localises to the nematocyst. Its function is as follows. Binds specifically to voltage-gated sodium channels (Nav), thereby delaying their inactivation during signal transduction. Thus it strongly stimulates mammalian cardiac muscle contraction. In Anemonia sulcata (Mediterranean snakelocks sea anemone), this protein is Delta-actitoxin-Avd1d.